Here is a 156-residue protein sequence, read N- to C-terminus: Ribosomal RNA large subunit methyltransferase H (156 aa).

Residues Gly104 and 123-128 (LSPMVM) each bind S-adenosyl-L-methionine.

It belongs to the RNA methyltransferase RlmH family. As to quaternary structure, homodimer.

The protein resides in the cytoplasm. It catalyses the reaction pseudouridine(1915) in 23S rRNA + S-adenosyl-L-methionine = N(3)-methylpseudouridine(1915) in 23S rRNA + S-adenosyl-L-homocysteine + H(+). Functionally, specifically methylates the pseudouridine at position 1915 (m3Psi1915) in 23S rRNA. In Bdellovibrio bacteriovorus (strain ATCC 15356 / DSM 50701 / NCIMB 9529 / HD100), this protein is Ribosomal RNA large subunit methyltransferase H.